Consider the following 199-residue polypeptide: Cytochrome b (199 aa).

4 helical membrane-spanning segments follow: residues 1-8, 32-53, 68-88, and 133-153; these read LTGLFLAM, WLIR…YFHI, WNIG…GYVL, and FFAF…LHLL. Histidine 38 and histidine 52 together coordinate heme b. Heme b contacts are provided by histidine 137 and histidine 151. Histidine 156 serves as a coordination point for a ubiquinone. A helical transmembrane segment spans residues 181 to 199; that stretch reads YKDLLGFAILLVALASLAH.

This sequence belongs to the cytochrome b family. In terms of assembly, the cytochrome bc1 complex contains 3 respiratory subunits (MT-CYB, CYC1 and UQCRFS1), 2 core proteins (UQCRC1 and UQCRC2) and probably 6 low-molecular weight proteins. The cofactor is heme b.

The protein localises to the mitochondrion inner membrane. Functionally, component of the ubiquinol-cytochrome c reductase complex (complex III or cytochrome b-c1 complex) that is part of the mitochondrial respiratory chain. The b-c1 complex mediates electron transfer from ubiquinol to cytochrome c. Contributes to the generation of a proton gradient across the mitochondrial membrane that is then used for ATP synthesis. This is Cytochrome b (mt-cyb) from Sarda chiliensis (Pacific bonito).